The following is a 465-amino-acid chain: Probable protein phosphatase 2C 71 (465 aa).

Disordered regions lie at residues 14–47, 68–119, and 133–191; these read RPCK…ACRA, RPRD…GEVT, and SGGA…PAEE. Residues 18–30 are compositionally biased toward pro residues; sequence LAPPPPPPLPVSP. Low complexity-rich tracts occupy residues 84-106 and 133-143; these read AVAP…AAAE and SGGAEATATSG. In terms of domain architecture, PPM-type phosphatase spans 222 to 460; it reads ASGAAILPHP…DDIAVVVSIV (239 aa). The Mn(2+) site is built by aspartate 254, glycine 255, aspartate 384, and aspartate 451.

Belongs to the PP2C family. It depends on Mg(2+) as a cofactor. The cofactor is Mn(2+).

The catalysed reaction is O-phospho-L-seryl-[protein] + H2O = L-seryl-[protein] + phosphate. It catalyses the reaction O-phospho-L-threonyl-[protein] + H2O = L-threonyl-[protein] + phosphate. The chain is Probable protein phosphatase 2C 71 from Oryza sativa subsp. japonica (Rice).